The primary structure comprises 514 residues: DNA damage-binding protein CMR1 (514 aa).

Residues 26–116 are disordered; sequence NLDSLSQSIK…VKQEEKEELS (91 aa). The span at 34–44 shows a compositional bias: basic and acidic residues; sequence IKRELPRASET. A compositionally biased stretch (basic residues) spans 45 to 55; that stretch reads KKRKTTPRTKA. Composition is skewed to basic and acidic residues over residues 56-65 and 92-116; these read VKKEDVEPSR and KFEDKVIKSDSTEPEVKQEEKEELS. 7 WD repeats span residues 180-221, 229-269, 280-320, 327-367, 385-423, 438-481, and 483-514; these read ISHT…DDSE, PHGK…STEV, DYAL…KPLK, LHDK…KANA, SSRLSVSCVDWNSENRLVCNGYDDYINIFDLNEESLIPD, GRWV…IAHL, and DSVGAVPAVCGFHPTKNWVVGGSASGKVYLFE.

The protein belongs to the WD repeat DDB2/WDR76 family.

In terms of biological role, DNA-binding protein that binds to both single- and double-stranded DNA. Binds preferentially to UV-damaged DNA. May be involved in DNA-metabolic processes. This is DNA damage-binding protein CMR1 (PRW1) from Scheffersomyces stipitis (strain ATCC 58785 / CBS 6054 / NBRC 10063 / NRRL Y-11545) (Yeast).